The chain runs to 1041 residues: Serine-repeat antigen protein 6 (1041 aa).

The first 34 residues, 1–34 (MIFFNFKLNRMICPIFFLYIINVLFTQYFIKCEG), serve as a signal peptide directing secretion. Asn84 carries N-linked (GlcNAc...) asparagine glycosylation. Positions 101-111 (KVVSSSESGKG) are enriched in low complexity. The tract at residues 101–173 (KVVSSSESGK…TESSSETLNK (73 aa)) is disordered. The segment covering 114-149 (VSHTKVTSEGLSDTQPNVTQSVSSSTHTPGSLDSTM) has biased composition (polar residues). N-linked (GlcNAc...) asparagine glycosylation is present at Asn130. The span at 150-168 (STEQHSSVSQSSLPTESSS) shows a compositional bias: low complexity. N-linked (GlcNAc...) asparagine glycosylation is present at Asn459. The disordered stretch occupies residues 500–577 (TLPSESPSES…GDTNYVYDFD (78 aa)). The span at 502–515 (PSESPSESSSKSDS) shows a compositional bias: low complexity. Basic and acidic residues predominate over residues 521-545 (NDKDKNEDKDDMSKNSKEEFKNDDK). The N-linked (GlcNAc...) asparagine glycan is linked to Asn554. Residues 564 to 574 (NINNGDTNYVY) show a composition bias toward low complexity. Asn583 is a glycosylation site (N-linked (GlcNAc...) asparagine). Cys654 is an active-site residue. An N-linked (GlcNAc...) asparagine glycan is attached at Asn684. Catalysis depends on residues His820 and Asn845. Asn984 carries N-linked (GlcNAc...) asparagine glycosylation.

It belongs to the peptidase C1 family. Post-translationally, just prior to merozoite egress from host erythrocytes, proteolytically cleaved by SUB1 to generate the active 75kDa form.

The protein localises to the parasitophorous vacuole lumen. The protein resides in the parasitophorous vacuole membrane. Cysteine protease which plays an essential role in merozoite egress from host erythrocytes. May cleave host SPTB/beta spectrin and ANK1/ankyrin-1 which disrupts host erythrocyte actin cytoskeleton and leads to host erythrocyte cell membrane rupture. This is Serine-repeat antigen protein 6 from Plasmodium falciparum.